The following is a 293-amino-acid chain: MGFPAAALLCALCCGLLAPAARAGYSEERCSWRGSGLTQEPGSVGQLALACAEGAVEWLYPAGALRLTLGGPDPRARPGIACLRPVRPFAGAQVFAERAGGALELLLAEGPGPAGGRCVRWGPRERRALFLQATPHQDISRRVAAFRFELREDGRPELPPQAHGLGVDGACRPCSDAELLLAACTSDFVIHGIIHGVTHDVELQESVITVVAARVLRQTPPLFQAGRSGDQGLTSIRTPLRCGVHPGPGTFLFMGWSRFGEARLGCAPRFQEFRRAYEAARAAHLHPCEVALH.

An N-terminal signal peptide occupies residues 1-23 (MGFPAAALLCALCCGLLAPAARA). 5 disulfide bridges follow: cysteine 30–cysteine 51, cysteine 82–cysteine 118, cysteine 171–cysteine 242, cysteine 174–cysteine 266, and cysteine 184–cysteine 288.

It belongs to the meteorin family. As to quaternary structure, monomer.

It localises to the secreted. Its function is as follows. Involved in both glial cell differentiation and axonal network formation during neurogenesis. Promotes astrocyte differentiation and transforms cerebellar astrocytes into radial glia. Also induces axonal extension in small and intermediate neurons of sensory ganglia by activating nearby satellite glia. This Homo sapiens (Human) protein is Meteorin (METRN).